The following is a 688-amino-acid chain: Elongation factor G 2 (688 aa).

Positions 7–282 constitute a tr-type G domain; the sequence is DSIRNIGIIS…AVAAYLPSPR (276 aa). GTP contacts are provided by residues 16 to 23, 80 to 84, and 134 to 137; these read SHIDAGKT, DTPGH, and NKMD.

This sequence belongs to the TRAFAC class translation factor GTPase superfamily. Classic translation factor GTPase family. EF-G/EF-2 subfamily.

It is found in the cytoplasm. Catalyzes the GTP-dependent ribosomal translocation step during translation elongation. During this step, the ribosome changes from the pre-translocational (PRE) to the post-translocational (POST) state as the newly formed A-site-bound peptidyl-tRNA and P-site-bound deacylated tRNA move to the P and E sites, respectively. Catalyzes the coordinated movement of the two tRNA molecules, the mRNA and conformational changes in the ribosome. This Geobacter metallireducens (strain ATCC 53774 / DSM 7210 / GS-15) protein is Elongation factor G 2.